A 302-amino-acid polypeptide reads, in one-letter code: Deoxyribonuclease-1-like 1 (302 aa).

Positions 1–18 (MHYPTALLFLILANGAQA) are cleaved as a signal peptide. Active-site residues include Glu97 and His148. A disulfide bridge connects residues Cys187 and Cys224. N-linked (GlcNAc...) asparagine glycosylation is present at Asn261.

The protein belongs to the DNase I family. As to expression, highest levels in skeletal and cardiac muscles. Detectable in all other tissues tested except brain.

It localises to the endoplasmic reticulum. This Homo sapiens (Human) protein is Deoxyribonuclease-1-like 1 (DNASE1L1).